Here is a 147-residue protein sequence, read N- to C-terminus: Myoglobin (147 aa).

The 136-residue stretch at A2–E137 folds into the Globin domain. Position 60 (H60) interacts with nitrite. H60 provides a ligand contact to O2. H89 is a heme b binding site.

It belongs to the globin family. As to quaternary structure, monomeric.

Its subcellular location is the cytoplasm. It localises to the sarcoplasm. The enzyme catalyses Fe(III)-heme b-[protein] + nitric oxide + H2O = Fe(II)-heme b-[protein] + nitrite + 2 H(+). It catalyses the reaction H2O2 + AH2 = A + 2 H2O. Its function is as follows. Monomeric heme protein which primary function is to store oxygen and facilitate its diffusion within muscle tissues. Reversibly binds oxygen through a pentacoordinated heme iron and enables its timely and efficient release as needed during periods of heightened demand. Depending on the oxidative conditions of tissues and cells, and in addition to its ability to bind oxygen, it also has a nitrite reductase activity whereby it regulates the production of bioactive nitric oxide. Under stress conditions, like hypoxia and anoxia, it also protects cells against reactive oxygen species thanks to its pseudoperoxidase activity. This is Myoglobin (mb) from Makaira nigricans (Atlantic blue marlin).